A 136-amino-acid chain; its full sequence is uncharacterized protein (136 aa).

Residues 14–34 (ASVFAFFVLFLFCLKIILVLF) form a helical membrane-spanning segment.

It localises to the membrane. This is an uncharacterized protein from Mycoplasma genitalium (strain ATCC 33530 / DSM 19775 / NCTC 10195 / G37) (Mycoplasmoides genitalium).